We begin with the raw amino-acid sequence, 195 residues long: Imidazoleglycerol-phosphate dehydratase (195 aa).

This sequence belongs to the imidazoleglycerol-phosphate dehydratase family.

The protein resides in the cytoplasm. The catalysed reaction is D-erythro-1-(imidazol-4-yl)glycerol 3-phosphate = 3-(imidazol-4-yl)-2-oxopropyl phosphate + H2O. It functions in the pathway amino-acid biosynthesis; L-histidine biosynthesis; L-histidine from 5-phospho-alpha-D-ribose 1-diphosphate: step 6/9. This chain is Imidazoleglycerol-phosphate dehydratase, found in Campylobacter curvus (strain 525.92).